A 117-amino-acid chain; its full sequence is Large ribosomal subunit protein uL18 (117 aa).

This sequence belongs to the universal ribosomal protein uL18 family. As to quaternary structure, part of the 50S ribosomal subunit; part of the 5S rRNA/L5/L18/L25 subcomplex. Contacts the 5S and 23S rRNAs.

In terms of biological role, this is one of the proteins that bind and probably mediate the attachment of the 5S RNA into the large ribosomal subunit, where it forms part of the central protuberance. The chain is Large ribosomal subunit protein uL18 from Vibrio vulnificus (strain CMCP6).